The primary structure comprises 124 residues: Small ribosomal subunit protein uS12 (124 aa).

Position 89 is a 3-methylthioaspartic acid (Asp-89).

It belongs to the universal ribosomal protein uS12 family. In terms of assembly, part of the 30S ribosomal subunit. Contacts proteins S8 and S17. May interact with IF1 in the 30S initiation complex.

Its function is as follows. With S4 and S5 plays an important role in translational accuracy. Interacts with and stabilizes bases of the 16S rRNA that are involved in tRNA selection in the A site and with the mRNA backbone. Located at the interface of the 30S and 50S subunits, it traverses the body of the 30S subunit contacting proteins on the other side and probably holding the rRNA structure together. The combined cluster of proteins S8, S12 and S17 appears to hold together the shoulder and platform of the 30S subunit. The polypeptide is Small ribosomal subunit protein uS12 (Erwinia amylovora (Fire blight bacteria)).